Consider the following 408-residue polypeptide: Eukaryotic initiation factor 4A-II (408 aa).

Residues 1–22 (MSGGSADYNSREHGGPEGMDPD) are disordered. The Q motif motif lies at 34-62 (DNFDDMNLKESLLRGIYAYGFEKPSAIQQ). In terms of domain architecture, Helicase ATP-binding spans 65 to 236 (IIPCIKGYDV…KKFMRDPIRI (172 aa)). Position 77-84 (77-84 (QAQSGTGK)) interacts with ATP. Thr160 is subject to Phosphothreonine. The DEAD box motif lies at 183-186 (LDEA). The region spanning 247 to 408 (GIKQFYINVE…EMPMNVADLI (162 aa)) is the Helicase C-terminal domain.

It belongs to the DEAD box helicase family. eIF4A subfamily. As to quaternary structure, eIF4F is a multi-subunit complex, the composition of which varies with external and internal environmental conditions. It is composed of at least EIF4A, EIF4E and EIF4G1/EIFFG3. Interacts with EIF4E. May interact with NOM1.

It carries out the reaction ATP + H2O = ADP + phosphate + H(+). In terms of biological role, ATP-dependent RNA helicase which is a subunit of the eIF4F complex involved in cap recognition and is required for mRNA binding to ribosome. In the current model of translation initiation, eIF4A unwinds RNA secondary structures in the 5'-UTR of mRNAs which is necessary to allow efficient binding of the small ribosomal subunit, and subsequent scanning for the initiator codon. In Macaca fascicularis (Crab-eating macaque), this protein is Eukaryotic initiation factor 4A-II (EIF4A2).